Reading from the N-terminus, the 394-residue chain is Fructose-bisphosphate aldolase, chloroplastic (394 aa).

A chloroplast-targeting transit peptide spans 1 to 46 (MASASLLKTSPVLDNPEFLKGQTLRIPSVAGVRFTPSGSSSLTVRA). Substrate contacts are provided by Arg-93 and Lys-183. Catalysis depends on Glu-223, which acts as the Proton acceptor. Lys-265 (schiff-base intermediate with dihydroxyacetone-P) is an active-site residue.

The protein belongs to the class I fructose-bisphosphate aldolase family.

It localises to the plastid. Its subcellular location is the chloroplast. It carries out the reaction beta-D-fructose 1,6-bisphosphate = D-glyceraldehyde 3-phosphate + dihydroxyacetone phosphate. It functions in the pathway carbohydrate degradation; glycolysis; D-glyceraldehyde 3-phosphate and glycerone phosphate from D-glucose: step 4/4. In Spinacia oleracea (Spinach), this protein is Fructose-bisphosphate aldolase, chloroplastic.